A 1012-amino-acid polypeptide reads, in one-letter code: Alanine--tRNA ligase, mitochondrial (1012 aa).

A mitochondrion-targeting transit peptide spans 1-24 (MYNSAKQLQRVLTAREIRKTFLDH). Zn(2+) contacts are provided by His656, His660, Cys766, and His770.

The protein belongs to the class-II aminoacyl-tRNA synthetase family. In terms of assembly, monomer. Zn(2+) is required as a cofactor.

The protein resides in the mitochondrion. The catalysed reaction is tRNA(Ala) + L-alanine + ATP = L-alanyl-tRNA(Ala) + AMP + diphosphate. Catalyzes the attachment of alanine to tRNA(Ala) in a two-step reaction: alanine is first activated by ATP to form Ala-AMP and then transferred to the acceptor end of tRNA(Ala). Also edits incorrectly charged tRNA(Ala) via its editing domain. In Drosophila melanogaster (Fruit fly), this protein is Alanine--tRNA ligase, mitochondrial.